A 341-amino-acid polypeptide reads, in one-letter code: uncharacterized protein (341 aa).

The next 4 helical transmembrane spans lie at 8–28 (LMLT…PLII), 63–83 (LMYF…VFAL), 171–191 (IYIM…IALS), and 317–337 (EFLV…KIFL). Residues 101–305 (DIVIVLDISP…SKKENLERKI (205 aa)) form the VWFA domain.

The protein localises to the cell membrane. This is an uncharacterized protein from Borreliella burgdorferi (strain ATCC 35210 / DSM 4680 / CIP 102532 / B31) (Borrelia burgdorferi).